The following is a 62-amino-acid chain: MTIAFQLAVFALIATSSVLVISVPLVFASPDGWSNNKNVVFSGTSLWIGLVFLVAILNSLIS.

2 helical membrane passes run 8-28 (AVFA…LVFA) and 41-61 (FSGT…NSLI).

This sequence belongs to the PsbZ family. As to quaternary structure, PSII is composed of 1 copy each of membrane proteins PsbA, PsbB, PsbC, PsbD, PsbE, PsbF, PsbH, PsbI, PsbJ, PsbK, PsbL, PsbM, PsbT, PsbY, PsbZ, Psb30/Ycf12, at least 3 peripheral proteins of the oxygen-evolving complex and a large number of cofactors. It forms dimeric complexes.

The protein localises to the plastid. The protein resides in the chloroplast thylakoid membrane. Functionally, may control the interaction of photosystem II (PSII) cores with the light-harvesting antenna, regulates electron flow through the 2 photosystem reaction centers. PSII is a light-driven water plastoquinone oxidoreductase, using light energy to abstract electrons from H(2)O, generating a proton gradient subsequently used for ATP formation. This chain is Photosystem II reaction center protein Z, found in Hordeum vulgare (Barley).